Consider the following 997-residue polypeptide: Frequency clock protein (997 aa).

Disordered stretches follow at residues 1-153 (MADS…HSSS), 214-311 (FAAS…LLPH), 381-447 (GENP…DLDP), 524-590 (SSDG…SRSP), 665-694 (DLSG…GDEA), 889-908 (EESF…FSDN), and 975-997 (SSVA…VSSS). The span at 74-94 (GESNDTGQSDPKSWFDQSNRN) shows a compositional bias: polar residues. Residues 115–125 (KETDSSNEDSR) show a composition bias toward basic and acidic residues. Positions 138–152 (DTQTQGFRATVAHSS) are enriched in polar residues. Residues 227–237 (QRRKAGRHGKA) show a composition bias toward basic residues. A compositionally biased stretch (low complexity) spans 239 to 261 (HSSGVSLSKHDSSSSSRSRPVDS). Residues 264 to 275 (ASMSTGRSSHAA) are compositionally biased toward polar residues. Residues 277-294 (SSGPSLGRPSLSSKSTSS) show a composition bias toward low complexity. A compositionally biased stretch (polar residues) spans 391–402 (KGATSASNSGGD). Over residues 410-421 (VTAGGDGNGSGG) the composition is skewed to gly residues. Basic and acidic residues predominate over residues 438–447 (RPTRPRDLDP). The short motif at 569–573 (RKKQK) is the Nuclear localization signal element. Residues 675-688 (PTEQMTATGEQEAS) show a composition bias toward polar residues. A compositionally biased stretch (polar residues) spans 986–997 (GYSSSMEDVSSS).

It belongs to the FRQ family.

It localises to the nucleus. Circadian clock component involved in the generation of biological rhythms, in particular in rhythm stability, period length, and temperature compensation. Behaves as a negative element in circadian transcriptional loop. The protein is Frequency clock protein (FRQ) of Sordaria fimicola.